The chain runs to 194 residues: Leucyl/phenylalanyl-tRNA--protein transferase (194 aa).

The protein belongs to the L/F-transferase family.

The protein localises to the cytoplasm. It carries out the reaction N-terminal L-lysyl-[protein] + L-leucyl-tRNA(Leu) = N-terminal L-leucyl-L-lysyl-[protein] + tRNA(Leu) + H(+). The enzyme catalyses N-terminal L-arginyl-[protein] + L-leucyl-tRNA(Leu) = N-terminal L-leucyl-L-arginyl-[protein] + tRNA(Leu) + H(+). It catalyses the reaction L-phenylalanyl-tRNA(Phe) + an N-terminal L-alpha-aminoacyl-[protein] = an N-terminal L-phenylalanyl-L-alpha-aminoacyl-[protein] + tRNA(Phe). Its function is as follows. Functions in the N-end rule pathway of protein degradation where it conjugates Leu, Phe and, less efficiently, Met from aminoacyl-tRNAs to the N-termini of proteins containing an N-terminal arginine or lysine. This Chlorobium limicola (strain DSM 245 / NBRC 103803 / 6330) protein is Leucyl/phenylalanyl-tRNA--protein transferase.